The sequence spans 600 residues: Autophagy-related protein 22-2 (600 aa).

The disordered stretch occupies residues 1–30 (MAFASPPASPPDEDGQARAPRYPGEDTTPT). The next 4 membrane-spanning stretches (helical) occupy residues 41-61 (YGIA…PLTL), 117-137 (SFAM…LISF), 149-168 (TLLV…FVFI), and 186-206 (CLGS…ASDP). The segment at 234–257 (SFDGDEPTHRPPTGLGLGGATGTS) is disordered. 4 helical membrane passes run 271 to 291 (GVGL…LLLF), 304 to 324 (TLPL…FTMV), 378 to 398 (VIVF…VSGT), and 414 to 434 (VALL…LWPI). Asn-444 carries an N-linked (GlcNAc...) asparagine glycan. Transmembrane regions (helical) follow at residues 449–469 (VCIA…IPLF), 484–506 (YPLA…SFFG), 526–546 (KGSS…TGQV), and 549–569 (GFFF…MVDA).

The protein belongs to the ATG22 family.

It localises to the vacuole membrane. Its function is as follows. Vacuolar effluxer which mediate the efflux of amino acids resulting from autophagic degradation. The release of autophagic amino acids allows the maintenance of protein synthesis and viability during nitrogen starvation. The polypeptide is Autophagy-related protein 22-2 (atg22-2) (Aspergillus niger (strain ATCC MYA-4892 / CBS 513.88 / FGSC A1513)).